Consider the following 1249-residue polypeptide: Protein lingerer (1249 aa).

A disordered region spans residues 1-66 (MSTQTRSGGG…VVKAKQPTAE (66 aa)). 2 stretches are compositionally biased toward gly residues: residues 7 to 30 (SGGGGGGGGRNKEAGGGSGGGAAG) and 38 to 50 (GSTGAASGAGAGG). The UBA domain occupies 84–124 (KIQEKIQSLMETTQRSEEEVCCALQECDSDLDRAVIFLLET). 10 disordered regions span residues 132–312 (TTSK…LKPE), 350–375 (SAGAGAQQQQSQQSTQTGVPPAASNV), 454–506 (MPPM…PPTT), 549–579 (YAAAATQQPPVRRQRARVPPPSKIPSSAVEM), 616–717 (TTGT…TSVS), 738–922 (PYGQ…SLPI), 1016–1042 (GRFTRTDNNSSPVSNVPSSLSQQTGSG), 1124–1149 (QQQSKGQTVANQQSGSGSGSDMAPSM), 1164–1186 (KQSFHSGTPPPYNIAGTQTAGTT), and 1211–1249 (QNMHQDSNSSGQRPQNNNQGKTASKQQGYSASTYWTGPN). Residues 186-209 (NRGGSGNQRSGGPGRGGRAGGYRD) are compositionally biased toward gly residues. The segment covering 210–227 (GGGDRDRDRDRNGYDKGG) has biased composition (basic and acidic residues). Gly residues-rich tracts occupy residues 228-240 (EGGGYRNRAGGDG) and 248-269 (DGPGGPGRGNYGSRGGRGGGPR). The segment covering 350 to 369 (SAGAGAQQQQSQQSTQTGVP) has biased composition (low complexity). Polar residues predominate over residues 457–494 (MNTSSSLSAEQSQYFSTLSSQNSNLQPTPSAVGFQQQP). Composition is skewed to low complexity over residues 549–559 (YAAAATQQPPV), 616–639 (TTGTAGSSTVQQQQQGAQVPPATV), and 647–664 (QSQLQQQQQQVVSQAPQQ). A compositionally biased stretch (polar residues) spans 678 to 705 (ASSQIMPGQGTTEALSSQNDGLANSYSR). A compositionally biased stretch (low complexity) spans 706–717 (TNASGSVSTSVS). Composition is skewed to polar residues over residues 738 to 769 (PYGQSASTNTALTGGYQNAPYSSTQANKTASY) and 777 to 809 (GYNNMSYSNNQVTNAYPPSTNNYSSYNQGNVNA). The span at 811–861 (QPPSSSVTNNVVPNNNTGNSVGGVSNQSNLPVNNNAVNSSSNNNAGGYLSS) shows a compositional bias: low complexity. Polar residues predominate over residues 862–873 (QYPVSQTSSAFP). Composition is skewed to low complexity over residues 874–884 (SQQNYQNSSQN), 892–922 (NSNTGVASSTVSNSSTNNSNNNVTSSSSLPI), and 1023–1034 (NNSSPVSNVPSS). The segment covering 1124 to 1138 (QQQSKGQTVANQQSG) has biased composition (polar residues). Residues 1216 to 1249 (DSNSSGQRPQNNNQGKTASKQQGYSASTYWTGPN) show a composition bias toward polar residues.

It localises to the cytoplasm. Acts in the nervous system to mediate the control of copulatory organs during courtship. The sequence is that of Protein lingerer from Anopheles gambiae (African malaria mosquito).